Here is a 181-residue protein sequence, read N- to C-terminus: Large ribosomal subunit protein uL5c (181 aa).

It belongs to the universal ribosomal protein uL5 family. Part of the 50S ribosomal subunit; contacts the 5S rRNA.

It is found in the plastid. Functionally, binds 5S rRNA, forms part of the central protuberance of the 50S subunit. In Helicosporidium sp. subsp. Simulium jonesii (Green alga), this protein is Large ribosomal subunit protein uL5c (rpl5).